The following is a 316-amino-acid chain: Olfactory receptor 6B9 (316 aa).

Over 1–22 (MENITNISEFILMGFPTAPWLQ) the chain is Extracellular. N-linked (GlcNAc...) asparagine glycosylation is found at Asn-3 and Asn-6. Residues 23–43 (ILLFSIFFITYVFVLLENLVI) form a helical membrane-spanning segment. Residues 44–64 (ILTVWVTGSLHKPMYYFLSTM) lie on the Cytoplasmic side of the membrane. Residues 65–85 (SFLEAWYISVTVPKMLAGFLF) traverse the membrane as a helical segment. Over 86-97 (RPNTISFLGCMT) the chain is Extracellular. An intrachain disulfide couples Cys-95 to Cys-187. Residues 98-118 (QLYFFMSLACTECVLLAAMAY) form a helical membrane-spanning segment. The Cytoplasmic portion of the chain corresponds to 119 to 132 (DRYVAICWPLRYPV). Residues 133–153 (MMTTGFCVQLTISSWVSGFTI) form a helical membrane-spanning segment. Residues 154–199 (SMAKVYFISRVAFCGNNVLNHFFCDVSPILKLACMNLSMAETVDFA) lie on the Extracellular side of the membrane. A helical membrane pass occupies residues 200-220 (LAIVILIFPLSATVLSYGFIV). The Cytoplasmic portion of the chain corresponds to 221 to 237 (STVLQIPSATGQRKAFS). The helical transmembrane segment at 238-258 (TCASHLTVVVIFYTAVIFMYV) threads the bilayer. Over 259-269 (RPRAIASFNSN) the chain is Extracellular. A helical membrane pass occupies residues 270–290 (KLISAIYAVFTPMLNPIIYCL). At 291 to 316 (RNKEVKDAIRKTIAGGRAPALGESIS) the chain is on the cytoplasmic side.

Belongs to the G-protein coupled receptor 1 family. As to expression, olfactory epithelium.

The protein resides in the cell membrane. Functionally, odorant receptor. The sequence is that of Olfactory receptor 6B9 from Mus musculus (Mouse).